The sequence spans 225 residues: Urease accessory protein UreG (225 aa).

Residue 25 to 32 (GPVGAGKT) participates in GTP binding.

The protein belongs to the SIMIBI class G3E GTPase family. UreG subfamily. As to quaternary structure, homodimer. UreD, UreF and UreG form a complex that acts as a GTP-hydrolysis-dependent molecular chaperone, activating the urease apoprotein by helping to assemble the nickel containing metallocenter of UreC. The UreE protein probably delivers the nickel.

The protein localises to the cytoplasm. Facilitates the functional incorporation of the urease nickel metallocenter. This process requires GTP hydrolysis, probably effectuated by UreG. This Haemophilus influenzae (strain ATCC 51907 / DSM 11121 / KW20 / Rd) protein is Urease accessory protein UreG.